Reading from the N-terminus, the 415-residue chain is Nuclear hormone receptor family member nhr-153 (415 aa).

A DNA-binding region (nuclear receptor) is located at residues 26-105 (PSVCQICRNP…AGMNPMAIQA (80 aa)). NR C4-type zinc fingers lie at residues 29-49 (CQIC…CNGC) and 65-88 (CFKV…CRAC). Positions 170 to 406 (DQRDLSTALS…DPEVLKKKCI (237 aa)) constitute an NR LBD domain.

This sequence belongs to the nuclear hormone receptor family.

It is found in the nucleus. Functionally, orphan nuclear receptor. The sequence is that of Nuclear hormone receptor family member nhr-153 (nhr-153) from Caenorhabditis elegans.